The primary structure comprises 489 residues: uncharacterized protein (489 aa).

12 helical membrane-spanning segments follow: residues 14–34, 36–56, 100–120, 127–147, 158–178, 203–223, 241–261, 286–306, 344–364, 380–400, 419–439, and 449–469; these read LLFV…ISLF, LGPF…IVTL, IIGP…FSGI, LVNT…LAFI, LIAL…IVAI, EISF…YAGV, ILIV…IILN, AAGL…NVST, IWFT…IPLV, VGSA…FKFI, LFCL…FPVI, and HTLT…LFLL.

The protein to M.genitalium MG226.

The protein localises to the cell membrane. This is an uncharacterized protein from Mycoplasma genitalium (strain ATCC 33530 / DSM 19775 / NCTC 10195 / G37) (Mycoplasmoides genitalium).